The chain runs to 248 residues: Ubiquinone biosynthesis O-methyltransferase (248 aa).

4 residues coordinate S-adenosyl-L-methionine: Arg41, Gly72, Asp93, and Met136.

Belongs to the methyltransferase superfamily. UbiG/COQ3 family.

The catalysed reaction is a 3-demethylubiquinol + S-adenosyl-L-methionine = a ubiquinol + S-adenosyl-L-homocysteine + H(+). It carries out the reaction a 3-(all-trans-polyprenyl)benzene-1,2-diol + S-adenosyl-L-methionine = a 2-methoxy-6-(all-trans-polyprenyl)phenol + S-adenosyl-L-homocysteine + H(+). The protein operates within cofactor biosynthesis; ubiquinone biosynthesis. Its function is as follows. O-methyltransferase that catalyzes the 2 O-methylation steps in the ubiquinone biosynthetic pathway. This is Ubiquinone biosynthesis O-methyltransferase from Bartonella bacilliformis (strain ATCC 35685 / KC583 / Herrer 020/F12,63).